The chain runs to 399 residues: Succinate--CoA ligase [ADP-forming] subunit beta (399 aa).

An ATP-grasp domain is found at 9–254 (KQVLAKYGVP…EDEEDPMELE (246 aa)). ATP-binding positions include lysine 46, 53-55 (GRG), glutamate 109, cysteine 112, and glutamate 117. Asparagine 209 and aspartate 223 together coordinate Mg(2+). Substrate is bound by residues asparagine 274 and 331–333 (GIM).

This sequence belongs to the succinate/malate CoA ligase beta subunit family. As to quaternary structure, heterotetramer of two alpha and two beta subunits. The cofactor is Mg(2+).

It catalyses the reaction succinate + ATP + CoA = succinyl-CoA + ADP + phosphate. The enzyme catalyses GTP + succinate + CoA = succinyl-CoA + GDP + phosphate. The protein operates within carbohydrate metabolism; tricarboxylic acid cycle; succinate from succinyl-CoA (ligase route): step 1/1. Functionally, succinyl-CoA synthetase functions in the citric acid cycle (TCA), coupling the hydrolysis of succinyl-CoA to the synthesis of either ATP or GTP and thus represents the only step of substrate-level phosphorylation in the TCA. The beta subunit provides nucleotide specificity of the enzyme and binds the substrate succinate, while the binding sites for coenzyme A and phosphate are found in the alpha subunit. The polypeptide is Succinate--CoA ligase [ADP-forming] subunit beta (Rhodospirillum rubrum (strain ATCC 11170 / ATH 1.1.1 / DSM 467 / LMG 4362 / NCIMB 8255 / S1)).